Reading from the N-terminus, the 103-residue chain is Small ribosomal subunit protein uS10 (103 aa).

Belongs to the universal ribosomal protein uS10 family. As to quaternary structure, part of the 30S ribosomal subunit.

Its function is as follows. Involved in the binding of tRNA to the ribosomes. This chain is Small ribosomal subunit protein uS10, found in Jannaschia sp. (strain CCS1).